The chain runs to 163 residues: Cyclic pyranopterin monophosphate synthase (163 aa).

Substrate is bound by residues 75 to 77 (MCH) and 115 to 116 (ME). The active site involves D130.

This sequence belongs to the MoaC family. In terms of assembly, homohexamer; trimer of dimers.

The catalysed reaction is (8S)-3',8-cyclo-7,8-dihydroguanosine 5'-triphosphate = cyclic pyranopterin phosphate + diphosphate. Its pathway is cofactor biosynthesis; molybdopterin biosynthesis. Functionally, catalyzes the conversion of (8S)-3',8-cyclo-7,8-dihydroguanosine 5'-triphosphate to cyclic pyranopterin monophosphate (cPMP). The chain is Cyclic pyranopterin monophosphate synthase from Bacillus pumilus (strain SAFR-032).